A 382-amino-acid chain; its full sequence is Serine/threonine-protein kinase (382 aa).

The span at 1–10 shows a compositional bias: basic and acidic residues; sequence MENKQCDHLT. Residues 1–75 are disordered; the sequence is MENKQCDHLT…ASESDEDDDD (75 aa). Over residues 12–24 the composition is skewed to polar residues; it reads WFSTTSDASESMD. Residues 45–75 show a composition bias toward acidic residues; the sequence is ADEDLYSDISEGDLEYSDCDSASESDEDDDD. A Protein kinase domain is found at 93-379; it reads YTVIKTLTPG…AEELLSYPMF (287 aa). ATP contacts are provided by residues 99–107 and Lys-122; that span reads LTPGSEGRV. Asp-207 (proton acceptor) is an active-site residue.

This sequence belongs to the protein kinase superfamily. Ser/Thr protein kinase family.

The catalysed reaction is L-seryl-[protein] + ATP = O-phospho-L-seryl-[protein] + ADP + H(+). It carries out the reaction L-threonyl-[protein] + ATP = O-phospho-L-threonyl-[protein] + ADP + H(+). This chain is Serine/threonine-protein kinase (US2), found in Equus caballus (Horse).